The primary structure comprises 1086 residues: Formin-like protein 2 (1086 aa).

Gly-2 carries the N-myristoyl glycine lipid modification. In terms of domain architecture, GBD/FH3 spans 23–469; that stretch reads LPMPEPGELE…EAIQRQSTLE (447 aa). A Phosphoserine modification is found at Ser-188. The tract at residues 513–597 is disordered; sequence SVGPTMGAAS…APPLPSAPPL (85 aa). The segment covering 525–537 has biased composition (pro residues); that stretch reads PLPPPPPPLPPSS. The span at 538–547 shows a compositional bias: polar residues; sequence DTPETVQNGP. Composition is skewed to pro residues over residues 548–576 and 583–597; these read VTPP…PLPG and PAPP…APPL. Positions 616–1007 constitute an FH2 domain; the sequence is IKKPIKTKFR…LMEKLLEQEA (392 aa). One can recognise a DAD domain in the interval 1040–1079; it reads NRHVYEGKDGAIEDIITVLKTVPFTARTAKRGSRFFCEPV.

Belongs to the formin homology family.

The protein localises to the cytoplasm. Its function is as follows. Plays a role in the regulation of cell morphology and cytoskeletal organization. Required in the cortical actin filament dynamics. In Homo sapiens (Human), this protein is Formin-like protein 2.